A 508-amino-acid chain; its full sequence is Lysine--tRNA ligase (508 aa).

Glutamate 418 and glutamate 425 together coordinate Mg(2+).

This sequence belongs to the class-II aminoacyl-tRNA synthetase family. As to quaternary structure, homodimer. Mg(2+) is required as a cofactor.

Its subcellular location is the cytoplasm. It carries out the reaction tRNA(Lys) + L-lysine + ATP = L-lysyl-tRNA(Lys) + AMP + diphosphate. The protein is Lysine--tRNA ligase of Burkholderia ambifaria (strain MC40-6).